We begin with the raw amino-acid sequence, 397 residues long: Lysophospholipid transporter LplT (397 aa).

Residues 1 to 17 (MSESVHTNTSLWSKGMK) are Periplasmic-facing. The chain crosses the membrane as a helical span at residues 18-38 (AVIVAQFLSAFGDNALLFATL). Over 39–52 (ALLKAQFYPEWSQP) the chain is Cytoplasmic. Residues 53 to 73 (ILQMVFVGAYILFAPFVGQVA) form a helical membrane-spanning segment. At 74–90 (DSFAKGRVMMFANGLKL) the chain is on the periplasmic side. A helical membrane pass occupies residues 91–111 (LGAASICFGINPFLGYTLVGV). Topologically, residues 112 to 144 (GAAAYSPAKYGILGELTTGSKLVKANGLMEAST) are cytoplasmic. Residues 145-165 (IAAILLGSVAGGVLADWHILV) traverse the membrane as a helical segment. Residue A166 is a topological domain, periplasmic. Residues 167–187 (LAACALAYGGAVVANIYIPKL) traverse the membrane as a helical segment. At 188–226 (AAARPGQSWNLISMTRSFLNACTSLWRNGETRFSLVGTS) the chain is on the cytoplasmic side. A helical transmembrane segment spans residues 227 to 247 (LFWGAGVTLRFLLVLWVPVAL). The Periplasmic portion of the chain corresponds to 248-256 (GITDNATPT). The chain crosses the membrane as a helical span at residues 257-277 (YLNAMVAIGIVVGAGAAAKLV). Over 278-280 (TLE) the chain is Cytoplasmic. A helical membrane pass occupies residues 281–301 (TVSRCMPAGILIGVVVLIFSL). Over 302–304 (QHE) the chain is Periplasmic. The chain crosses the membrane as a helical span at residues 305 to 325 (LLPAYALLMLIGVLGGFFVVP). The Cytoplasmic portion of the chain corresponds to 326–343 (LNALLQERGKKSVGAGNA). Residues 344-364 (IAVQNLGENSAMLLMLGIYSL) traverse the membrane as a helical segment. Topologically, residues 365 to 366 (AV) are periplasmic. Residues 367 to 387 (MVGIPVVPIGIGFGALFALAI) traverse the membrane as a helical segment. The Cytoplasmic segment spans residues 388 to 397 (TALWIWQRRH).

This sequence belongs to the major facilitator superfamily. LplT (TC 2.A.1.42) family.

It is found in the cell inner membrane. In terms of biological role, catalyzes the facilitated diffusion of 2-acyl-glycero-3-phosphoethanolamine (2-acyl-GPE) into the cell. The polypeptide is Lysophospholipid transporter LplT (Escherichia coli O6:K15:H31 (strain 536 / UPEC)).